The following is a 345-amino-acid chain: Tropomodulin-4 (345 aa).

A disordered region spans residues 42–63; it reads NMLLPAGLRQRDQTKKSPTGPL.

This sequence belongs to the tropomodulin family. Binds to the N-terminus of tropomyosin and to actin. Highly expressed in skeletal muscle.

The protein resides in the cytoplasm. Its subcellular location is the cytoskeleton. Blocks the elongation and depolymerization of the actin filaments at the pointed end. The Tmod/TM complex contributes to the formation of the short actin protofilament, which in turn defines the geometry of the membrane skeleton. In Homo sapiens (Human), this protein is Tropomodulin-4 (TMOD4).